We begin with the raw amino-acid sequence, 730 residues long: Ribosomal RNA large subunit methyltransferase K/L (730 aa).

Residues 46–157 form the THUMP domain; the sequence is TAYRLCLWSR…RGEAILSLDL (112 aa). Residues 399 to 408 show a composition bias toward basic and acidic residues; it reads AAVEEGEPRR. The disordered stretch occupies residues 399–418; the sequence is AAVEEGEPRRQAPVASEPAR.

It belongs to the methyltransferase superfamily. RlmKL family.

The protein resides in the cytoplasm. The enzyme catalyses guanosine(2445) in 23S rRNA + S-adenosyl-L-methionine = N(2)-methylguanosine(2445) in 23S rRNA + S-adenosyl-L-homocysteine + H(+). It carries out the reaction guanosine(2069) in 23S rRNA + S-adenosyl-L-methionine = N(2)-methylguanosine(2069) in 23S rRNA + S-adenosyl-L-homocysteine + H(+). In terms of biological role, specifically methylates the guanine in position 2445 (m2G2445) and the guanine in position 2069 (m7G2069) of 23S rRNA. The sequence is that of Ribosomal RNA large subunit methyltransferase K/L from Pseudomonas entomophila (strain L48).